The chain runs to 273 residues: MSSPRQVFYISDRTGLTAENIGEALLNQFGNLSFKRHTHPFVDTPEKARAVVEKVNRSRQENGQRPIAFVSVVDDEIRRIIKGADAFQINFFETFLGLLEKELNTEATVSGQGHHSIGNTKRYDARMEAVNFSLNHDDGVSDKNLQEADVILMGVSRSGKTPTCLYLALQYGIRAANYPLIPDDLESADLPRMVKPYKDKLFGLTIQPERLQAIRQERRPNSAYARIDTCRSEVADAQSMFRRHGIPFANTTDKSVEELAVHILQACKLKRRF.

154-161 (GVSRSGKT) lines the ADP pocket.

Belongs to the pyruvate, phosphate/water dikinase regulatory protein family. PSRP subfamily.

It carries out the reaction [pyruvate, water dikinase] + ADP = [pyruvate, water dikinase]-phosphate + AMP + H(+). The catalysed reaction is [pyruvate, water dikinase]-phosphate + phosphate + H(+) = [pyruvate, water dikinase] + diphosphate. Bifunctional serine/threonine kinase and phosphorylase involved in the regulation of the phosphoenolpyruvate synthase (PEPS) by catalyzing its phosphorylation/dephosphorylation. In Neisseria gonorrhoeae (strain ATCC 700825 / FA 1090), this protein is Putative phosphoenolpyruvate synthase regulatory protein.